The sequence spans 541 residues: MSNNNFKDDFEKNRQSIDPKEHQENTQDSVNDSVDNIKEEVSDKSDEQFPPRNAQRRQRRRDTATNQREDEQSNQEHHNENNEVGDRDNGLQHEDNSSRDSNADKESNDPSQNNNLIHESSNNQQSENRHDINNEKDQSDKDSNNKKGAVIASSGAAGVGAYAASKHNDAASSSKDHNDKAHQQNQDWEQSNQTNDSTETQDENTNNHDSKKKGAAVAGGAAAAGAGAYAAGKHKGKKDKNDNEPEQNESKSDVKNEEKHGSKKKGAAVAGGAAAAGTGAAAASHSKSSTGNGGNGNGGNGGNGNNGDNNHDSEDNNKKKGGLLGKLLPIIAAILILAAIGIFGGMALTGNNDDKGSDDDKKVADNKDKDSDKAKDADSDKDSKSDKDKDKAKDDDNNQATTDSDSSDSSDNANSDSDQGNNDSQDQANSDQNQGTQDEQNSQNNQDQQSDQSQQNGQANSNQNGSSDQSQNASNDSNQQNNQSSNSNSGQRTHVVNGQNLYRIAIQYYGEGTPENVEKIREANNIQGNDIHNGQRLVIPQ.

Composition is skewed to basic and acidic residues over residues 1–25 (MSNN…HQEN), 35–49 (DNIK…DEQF), and 61–108 (RDTA…KESN). 2 disordered regions span residues 1 to 322 (MSNN…KKGG) and 346 to 493 (MALT…GQRT). The span at 109–126 (DPSQNNNLIHESSNNQQS) shows a compositional bias: polar residues. The segment covering 127-145 (ENRHDINNEKDQSDKDSNN) has biased composition (basic and acidic residues). The span at 146-165 (KKGAVIASSGAAGVGAYAAS) shows a compositional bias: low complexity. Residues 166–182 (KHNDAASSSKDHNDKAH) show a composition bias toward basic and acidic residues. A compositionally biased stretch (polar residues) spans 183–198 (QQNQDWEQSNQTNDST). Low complexity predominate over residues 215-231 (AAVAGGAAAAGAGAYAA). Residues 239 to 260 (DKNDNEPEQNESKSDVKNEEKH) show a composition bias toward basic and acidic residues. The span at 267–290 (AAVAGGAAAAGTGAAAASHSKSST) shows a compositional bias: low complexity. The span at 291-305 (GNGGNGNGGNGGNGN) shows a compositional bias: gly residues. A compositionally biased stretch (basic and acidic residues) spans 309–318 (NNHDSEDNNK). Residues 327 to 347 (LLPIIAAILILAAIGIFGGMA) traverse the membrane as a helical segment. Basic and acidic residues predominate over residues 352-396 (NDDKGSDDDKKVADNKDKDSDKAKDADSDKDSKSDKDKDKAKDDD). Residues 398–491 (NQATTDSDSS…NQSSNSNSGQ (94 aa)) show a composition bias toward low complexity. The LysM domain occupies 491 to 539 (QRTHVVNGQNLYRIAIQYYGEGTPENVEKIREANNIQGNDIHNGQRLVI).

Its subcellular location is the cell membrane. In Staphylococcus saprophyticus subsp. saprophyticus (strain ATCC 15305 / DSM 20229 / NCIMB 8711 / NCTC 7292 / S-41), this protein is Probable elastin-binding protein EbpS (ebpS).